The chain runs to 140 residues: Ribonuclease P protein component (140 aa).

The interval 115-140 (RCKPGAPKPPPFKKRPNKSVKSNKQT) is disordered.

Belongs to the RnpA family. As to quaternary structure, consists of a catalytic RNA component (M1 or rnpB) and a protein subunit.

It carries out the reaction Endonucleolytic cleavage of RNA, removing 5'-extranucleotides from tRNA precursor.. In terms of biological role, RNaseP catalyzes the removal of the 5'-leader sequence from pre-tRNA to produce the mature 5'-terminus. It can also cleave other RNA substrates such as 4.5S RNA. The protein component plays an auxiliary but essential role in vivo by binding to the 5'-leader sequence and broadening the substrate specificity of the ribozyme. This chain is Ribonuclease P protein component, found in Pseudoalteromonas translucida (strain TAC 125).